The chain runs to 345 residues: Biotin synthase (345 aa).

Residues 49–276 (NQVQMSTLLS…ASFVRLSAGR (228 aa)) enclose the Radical SAM core domain. [4Fe-4S] cluster-binding residues include cysteine 64, cysteine 68, and cysteine 71. The [2Fe-2S] cluster site is built by cysteine 108, cysteine 139, cysteine 199, and arginine 271.

Belongs to the radical SAM superfamily. Biotin synthase family. In terms of assembly, homodimer. [4Fe-4S] cluster is required as a cofactor. It depends on [2Fe-2S] cluster as a cofactor.

It carries out the reaction (4R,5S)-dethiobiotin + (sulfur carrier)-SH + 2 reduced [2Fe-2S]-[ferredoxin] + 2 S-adenosyl-L-methionine = (sulfur carrier)-H + biotin + 2 5'-deoxyadenosine + 2 L-methionine + 2 oxidized [2Fe-2S]-[ferredoxin]. It functions in the pathway cofactor biosynthesis; biotin biosynthesis; biotin from 7,8-diaminononanoate: step 2/2. Its function is as follows. Catalyzes the conversion of dethiobiotin (DTB) to biotin by the insertion of a sulfur atom into dethiobiotin via a radical-based mechanism. This chain is Biotin synthase, found in Nitrosococcus oceani (strain ATCC 19707 / BCRC 17464 / JCM 30415 / NCIMB 11848 / C-107).